A 158-amino-acid chain; its full sequence is Transcription elongation factor GreA (158 aa).

The protein belongs to the GreA/GreB family.

Functionally, necessary for efficient RNA polymerase transcription elongation past template-encoded arresting sites. The arresting sites in DNA have the property of trapping a certain fraction of elongating RNA polymerases that pass through, resulting in locked ternary complexes. Cleavage of the nascent transcript by cleavage factors such as GreA or GreB allows the resumption of elongation from the new 3'terminus. GreA releases sequences of 2 to 3 nucleotides. The chain is Transcription elongation factor GreA from Rhizobium etli (strain ATCC 51251 / DSM 11541 / JCM 21823 / NBRC 15573 / CFN 42).